A 451-amino-acid polypeptide reads, in one-letter code: MDDDSNQKPLFHMALGVLTSLTPPQHHIELVDEHFHDKINYDGDYDMVGITSRTIEATRAYEIADEFRKRGKTVVLGGLHISFNPEEAAAHADCIVVGEADNLWTTLLDDVANNRLKERYDSKDFPPVKAITPLDYARIAKASKRTKVDGTKSIPIYVTRGCPFNCSFCVTPNFTGKQYRVQDPKLLKHQIEEAKKYFFKANGKNSKPWFMLTDENLGINKKKLWESLDLLKECDITFSVFLSINFLEDPTTVKKLVDAGCNFVLAGLESIKQSTLEAYNKGHVNSAEKYSKIIEDCRKAGLNIQGNFLFNPAIDTFEDIDELVQFVKKNHIFMPIFQIITPYPGTQMYHEYRESGLITIEDWEKYNALHLVIKSDRYEPLLFQYKVLKSYVEVYTWKEILLRTLYNPRKLINLVTSIAFKKHLAAQLKAFERNHKMNPAMLSGVKPVMNG.

The 118-residue stretch at 1-118 (MDDDSNQKPL…DDVANNRLKE (118 aa)) folds into the B12-binding domain. The 230-residue stretch at 148-377 (VDGTKSIPIY…ALHLVIKSDR (230 aa)) folds into the Radical SAM core domain. Positions 162, 166, and 169 each coordinate [4Fe-4S] cluster.

It belongs to the radical SAM superfamily. The cofactor is [4Fe-4S] cluster.

The protein resides in the cytoplasm. The catalysed reaction is 8,12-diethyl-3-vinylbacteriochlorophyllide d + S-adenosyl-L-methionine = 12-ethyl-8-propyl-3-vinylbacteriochlorophyllide d + S-adenosyl-L-homocysteine + H(+). It catalyses the reaction 12-ethyl-8-propyl-3-vinylbacteriochlorophyllide d + S-adenosyl-L-methionine = 12-ethyl-8-isobutyl-3-vinylbacteriochlorophyllide d + S-adenosyl-L-homocysteine + H(+). It participates in porphyrin-containing compound metabolism; bacteriochlorophyll biosynthesis (light-independent). Its function is as follows. Involved in the biosynthesis of the major light-harvesting pigment bacteriochlorophyll c (BChlc), which confers a significant competitive advantage to green sulfur bacteria living at limiting red and near-infrared light intensities. BchQ is a methyltransferase that adds two consecutive methyl groups to the ethyl carbon at the C-8(2) position of 8,12-diethyl-3-vinylbacteriochlorophyllide d to yield 12-ethyl-8-isobutyl-3-vinylbacteriochlorophyllide d. The protein is Bacteriochlorophyllide d C-8(2)-methyltransferase of Chlorobaculum tepidum (strain ATCC 49652 / DSM 12025 / NBRC 103806 / TLS) (Chlorobium tepidum).